Reading from the N-terminus, the 428-residue chain is MEILMASSNLIKQLQERGLVAQVTDEEALAERLAQGPIALYCGFDPTADSLHLGHLVPLLCLKRFQQAGHKPVALVGGATGLIGDPSFKAAERKLNTEETVQEWVDKIRKQVAPFLDFDCGENSAIAANNYDWFGNMNVLTFLRDIGKHFSVNQMINKEAVKQRLNREDQGISFTEFSYNLLQGYDFACLNKQYGVVLQIGGSDQWGNITSGIDLTRRLHQNQVFGLTVPLITKADGTKFGKTEGGAVWLDPKKTSPYKFYQFWINTADADVYRFLKFFTFMSIEEINALEEEDKNSGKAPRAQYVLAEQVTRLVHGEDGLQAAKRITECLFSGSLSALSEADFEQLAQDGVPMVEMEKGADLMQALVDSELQPSRGQARKTIASNAITINGEKQSDPEYFFKEEDRLFGRFTLLRRGKKNYCLICWK.

Y41 contributes to the L-tyrosine binding site. Positions 46–55 (PTADSLHLGH) match the 'HIGH' region motif. K148 carries the N6-acetyllysine modification. The L-tyrosine site is built by Y179 and Q183. Residues 239 to 243 (KFGKT) carry the 'KMSKS' region motif. Residue K242 coordinates ATP. The region spanning 361-418 (ADLMQALVDSELQPSRGQARKTIASNAITINGEKQSDPEYFFKEEDRLFGRFTLLRRG) is the S4 RNA-binding domain.

It belongs to the class-I aminoacyl-tRNA synthetase family. TyrS type 1 subfamily. In terms of assembly, homodimer.

The protein localises to the cytoplasm. The catalysed reaction is tRNA(Tyr) + L-tyrosine + ATP = L-tyrosyl-tRNA(Tyr) + AMP + diphosphate + H(+). Its function is as follows. Catalyzes the attachment of tyrosine to tRNA(Tyr) in a two-step reaction: tyrosine is first activated by ATP to form Tyr-AMP and then transferred to the acceptor end of tRNA(Tyr). The protein is Tyrosine--tRNA ligase of Escherichia coli O1:K1 / APEC.